The primary structure comprises 109 residues: Protein FAM32A-like (109 aa).

The tract at residues 1–48 (MSEYKSVQKGSLKLKGVSLPSKKKKKKNKEMKRLEEQVLTSENEEGTK) is disordered. Residues 9-20 (KGSLKLKGVSLP) are compositionally biased toward low complexity. The segment covering 21-30 (SKKKKKKNKE) has biased composition (basic residues).

It belongs to the FAM32 family.

The protein resides in the nucleus. In terms of biological role, may induce G2 arrest and apoptosis. May also increase cell sensitivity to apoptotic stimuli. The polypeptide is Protein FAM32A-like (fam32al) (Danio rerio (Zebrafish)).